The sequence spans 434 residues: Alpha-enolase (434 aa).

Residue S2 is modified to N-acetylserine. K5 is modified (N6-acetyllysine). S27 carries the phosphoserine modification. The epitope recognized by CAR and healthy patient antibodies stretch occupies residues 31-38 (FRAAVPSG). Position 40 (S40) interacts with Mg(2+). Y44 carries the phosphotyrosine modification. The epitope recognized by CAR antibodies stretch occupies residues 56–63 (RYMGKGVS). At K60 the chain carries N6-acetyllysine; alternate. An N6-succinyllysine; alternate modification is found at K60. N6-acetyllysine is present on residues K64 and K71. At K89 the chain carries N6-acetyllysine; alternate. K89 is modified (N6-succinyllysine; alternate). K92 and K126 each carry N6-acetyllysine. A required for repression of c-myc promoter activity region spans residues 97-237 (MDGTENKSKF…KTAIGKAGYT (141 aa)). The substrate site is built by H158 and E167. N6-acetyllysine is present on residues K193 and K199. Position 202 is an N6-acetyllysine; alternate (K202). K202 is covalently cross-linked (Glycyl lysine isopeptide (Lys-Gly) (interchain with G-Cter in SUMO2); alternate). E210 (proton donor) is an active-site residue. An N6-acetyllysine; alternate mark is found at K228 and K233. K228 bears the N6-succinyllysine; alternate mark. Position 228 is an N6-(2-hydroxyisobutyryl)lysine; alternate (K228). At K233 the chain carries N6-malonyllysine; alternate. Residue D245 participates in Mg(2+) binding. Phosphoserine is present on S254. K256 bears the N6-acetyllysine mark. S263 and S272 each carry phosphoserine. An N6-acetyllysine; alternate modification is found at K281. Position 281 is an N6-(2-hydroxyisobutyryl)lysine; alternate (K281). K285 is subject to N6-acetyllysine. The residue at position 287 (Y287) is a Phosphotyrosine. S291 carries the phosphoserine modification. Mg(2+)-binding residues include E293 and D318. Substrate is bound by residues E293 and D318. N6-acetyllysine occurs at positions 335 and 343. K343 functions as the Proton acceptor in the catalytic mechanism. Substrate is bound by residues 370 to 373 (SHRS) and K394. A required for interaction with PLG region spans residues 405 to 434 (AKYNQLLRIEEELGSKAKFAGRNFRNPLAK). Position 406 is an N6-acetyllysine (K406). K420 carries the N6-acetyllysine; alternate modification. K420 is subject to N6-succinyllysine; alternate. K420 carries the N6-malonyllysine; alternate modification.

It belongs to the enolase family. As to quaternary structure, mammalian enolase is composed of 3 isozyme subunits, alpha, beta and gamma, which can form homodimers or heterodimers which are cell-type and development-specific. ENO1 interacts with PLG in the neuronal plasma membrane and promotes its activation. The C-terminal lysine is required for this binding. Isoform MBP-1 interacts with TRAPPC2B. Interacts with ENO4 and PGAM2. Interacts with CMTM6. It depends on Mg(2+) as a cofactor. ISGylated. Post-translationally, lysine 2-hydroxyisobutyrylation (Khib) by p300/EP300 activates the phosphopyruvate hydratase activity. As to expression, the alpha/alpha homodimer is expressed in embryo and in most adult tissues. The alpha/beta heterodimer and the beta/beta homodimer are found in striated muscle, and the alpha/gamma heterodimer and the gamma/gamma homodimer in neurons.

The protein resides in the cytoplasm. The protein localises to the cell membrane. It is found in the myofibril. It localises to the sarcomere. Its subcellular location is the m line. The protein resides in the nucleus. The enzyme catalyses (2R)-2-phosphoglycerate = phosphoenolpyruvate + H2O. Its pathway is carbohydrate degradation; glycolysis; pyruvate from D-glyceraldehyde 3-phosphate: step 4/5. Glycolytic enzyme the catalyzes the conversion of 2-phosphoglycerate to phosphoenolpyruvate. In addition to glycolysis, involved in various processes such as growth control, hypoxia tolerance and allergic responses. May also function in the intravascular and pericellular fibrinolytic system due to its ability to serve as a receptor and activator of plasminogen on the cell surface of several cell-types such as leukocytes and neurons. Stimulates immunoglobulin production. Functionally, binds to the myc promoter and acts as a transcriptional repressor. May be a tumor suppressor. The chain is Alpha-enolase (ENO1) from Homo sapiens (Human).